The primary structure comprises 1362 residues: DNA-directed RNA polymerase subunit beta'' (1362 aa).

Positions 224, 295, 302, and 305 each coordinate Zn(2+).

The protein belongs to the RNA polymerase beta' chain family. RpoC2 subfamily. As to quaternary structure, in plastids the minimal PEP RNA polymerase catalytic core is composed of four subunits: alpha, beta, beta', and beta''. When a (nuclear-encoded) sigma factor is associated with the core the holoenzyme is formed, which can initiate transcription. The cofactor is Zn(2+).

The protein localises to the plastid. Its subcellular location is the chloroplast. The enzyme catalyses RNA(n) + a ribonucleoside 5'-triphosphate = RNA(n+1) + diphosphate. Functionally, DNA-dependent RNA polymerase catalyzes the transcription of DNA into RNA using the four ribonucleoside triphosphates as substrates. This is DNA-directed RNA polymerase subunit beta'' from Helianthus annuus (Common sunflower).